Reading from the N-terminus, the 248-residue chain is MKKLLAVFCAGAFVSTSVFAAIPPGNDVTTKPDLYYLKNSQAIDSLALLPPPPEVGSILFLNDQAMYEKGRLLRNTERGEQAAKDADLAAGGVANAFSEAFGYPITEKDAPEIHKLLTNMIEDAGDLATRSAKEKYMRIRPFAFYGVATCNTKDQDKLSKNGSYPSGHTAIGWASALVLSEINPENQDKILKRGYELGQSRVICGYHWQSDVDAARIVASGAVATLHSNPEFQKQLQKAKDEFAKLKK.

A signal peptide spans 1 to 20; it reads MKKLLAVFCAGAFVSTSVFA.

Belongs to the class A bacterial acid phosphatase family.

The protein resides in the periplasm. It carries out the reaction a phosphate monoester + H2O = an alcohol + phosphate. This is Non-specific acid phosphatase (phoN) from Providencia stuartii.